We begin with the raw amino-acid sequence, 123 residues long: Small ribosomal subunit protein uS13c (123 aa).

A disordered region spans residues 90–123; it reads GKRHRNSLPVRGQRTRTNARSRRGAKKTVTGKKK. Residues 102-123 show a composition bias toward basic residues; that stretch reads QRTRTNARSRRGAKKTVTGKKK.

This sequence belongs to the universal ribosomal protein uS13 family. In terms of assembly, part of the 30S ribosomal subunit.

The protein resides in the plastid. It localises to the chloroplast. Located at the top of the head of the 30S subunit, it contacts several helices of the 16S rRNA. In Thalassiosira pseudonana (Marine diatom), this protein is Small ribosomal subunit protein uS13c.